The following is a 928-amino-acid chain: Interphotoreceptor matrix proteoglycan 1 (928 aa).

Positions methionine 1–glycine 20 are cleaved as a signal peptide. The tract at residues serine 26–lysine 50 is disordered. Residues asparagine 29–threonine 49 show a composition bias toward basic and acidic residues. Asparagine 143 carries N-linked (GlcNAc...) asparagine glycosylation. Over residues glutamine 164 to aspartate 182 the composition is skewed to basic and acidic residues. Residues glutamine 164–proline 191 are disordered. N-linked (GlcNAc...) asparagine glycans are attached at residues asparagine 203 and asparagine 212. An SEA 1 domain is found at alanine 231–glutamine 356. 2 disordered regions span residues leucine 441–isoleucine 481 and alanine 494–isoleucine 522. Basic and acidic residues predominate over residues proline 466–aspartate 477. The SEA 2 domain maps to lysine 735–glutamine 848. N-linked (GlcNAc...) asparagine glycosylation is found at asparagine 756 and asparagine 780. The Heparin- and hyaluronan-binding motif lies at lysine 785 to arginine 793. Residues asparagine 794 and asparagine 812 are each glycosylated (N-linked (GlcNAc...) asparagine).

Highly glycosylated (N- and O-linked carbohydrates and sialic acid). Abundantly expressed in the retina (at protein level). Localizes to the photoreceptor layer of the interphotoreceptor matrix of the retina (at protein level).

It localises to the cell projection. The protein resides in the cilium. Its subcellular location is the photoreceptor outer segment. The protein localises to the secreted. It is found in the extracellular space. It localises to the extracellular matrix. The protein resides in the interphotoreceptor matrix. Its subcellular location is the photoreceptor inner segment. Functionally, chondroitin sulfate-, heparin- and hyaluronan-binding protein. May serve to form a basic macromolecular scaffold comprising the insoluble interphotoreceptor matrix. The polypeptide is Interphotoreceptor matrix proteoglycan 1 (Gallus gallus (Chicken)).